A 241-amino-acid chain; its full sequence is MHLCALLIAAAGVLASVRANYVEIDAYTVKPFAQQKPSTDSERSALKYKPHLHVQAGCHPYPAVQRDGSLSAGFEWKEKNSQPCGRSPLGSQVYSRSNWYKEKWAIMYAWYFPKASNHIGRGVSGSRHYWLYAIVWTDDANPTNSSLLGVTLSAGIGLSKHTKLKSKHVIDGTTLKLKSHLSFWGRRLALKFTNKLGETQDLITWEQLPPEAQTALTLDYKLNTPLQDFRFEDLLKEAYPF.

The signal sequence occupies residues 1-19; the sequence is MHLCALLIAAAGVLASVRA. The short motif at 105-115 is the Conserved undecapeptide motif element; it reads AIMYAWYFPKA. The short motif at 125 to 131 is the Conserved heptapeptide motif element; that stretch reads GSRHYWL. Asn144 is a glycosylation site (N-linked (GlcNAc...) asparagine).

This sequence belongs to the Necrosis inducing protein (NPP1) family.

It is found in the secreted. Functionally, secreted effector that acts as a pathogen-associated molecular pattern (PAMP) recognized by the plant immune system. Induces necrosis in Nicotiana benthamiana leaves and can induce Phytophthora capsici resistance in Nicotiana benthamiana. Also significantly improves disease resistance of Arabidopsis thaliana to Hyaloperonospora arabidopsidis. causes an inhibition of plant growth which is typically associated with enhanced immunity when over-expressed in Arabidopsis. The chain is NLP effector protein 7 from Plasmopara viticola (Downy mildew of grapevine).